Reading from the N-terminus, the 537-residue chain is Efflux pump ustT (537 aa).

The span at 1–25 shows a compositional bias: basic and acidic residues; that stretch reads MAKEAQSLHELDNMKEKEVDQEKKA. Residues 1–50 form a disordered region; that stretch reads MAKEAQSLHELDNMKEKEVDQEKKAPTSVGDQEEHDDPKKQASHSQNVSE. Asparagine 47 carries N-linked (GlcNAc...) asparagine glycosylation. 8 helical membrane-spanning segments follow: residues 71 to 91, 104 to 124, 137 to 157, 162 to 182, 193 to 213, 236 to 256, 266 to 286, and 304 to 324; these read PLAM…VSLL, WVYM…AGAM, GIGL…NAPL, MFLG…PLIG, WCFI…FFFV, LGSA…QWAG, IILL…SQML, and FGSF…TYWI. The N-linked (GlcNAc...) asparagine glycan is linked to asparagine 333. 4 helical membrane-spanning segments follow: residues 339-359, 363-383, 397-417, and 430-450; these read AGIR…MGGG, LIGY…VGAG, WIGY…QASL, and TAIS…VCIG. Asparagine 501 carries an N-linked (GlcNAc...) asparagine glycan. A helical membrane pass occupies residues 507-527; the sequence is TFYVALAAGITSMLSAFLVQW.

It belongs to the major facilitator superfamily. TCR/Tet family.

It is found in the cell membrane. In terms of biological role, efflux pump; part of the gene cluster that mediates the biosynthesis of ustilaginoidins, dimeric gamma-naphthopyrones isolated from different fungal species. This is Efflux pump ustT from Ustilaginoidea virens (Rice false smut fungus).